The chain runs to 129 residues: Small ribosomal subunit protein uS11 (129 aa).

Belongs to the universal ribosomal protein uS11 family. In terms of assembly, part of the 30S ribosomal subunit. Interacts with proteins S7 and S18. Binds to IF-3.

Located on the platform of the 30S subunit, it bridges several disparate RNA helices of the 16S rRNA. Forms part of the Shine-Dalgarno cleft in the 70S ribosome. This Pseudomonas fluorescens (strain ATCC BAA-477 / NRRL B-23932 / Pf-5) protein is Small ribosomal subunit protein uS11.